The following is a 48-amino-acid chain: Large ribosomal subunit protein bL34 (48 aa).

Belongs to the bacterial ribosomal protein bL34 family.

This Mycoplasma pneumoniae (strain ATCC 29342 / M129 / Subtype 1) (Mycoplasmoides pneumoniae) protein is Large ribosomal subunit protein bL34 (rpmH).